We begin with the raw amino-acid sequence, 95 residues long: Acylphosphatase (95 aa).

An Acylphosphatase-like domain is found at 10–95; that stretch reads CIHVTVSGKV…VEDYSDFRVR (86 aa). Active-site residues include Arg-25 and Asn-43.

The protein belongs to the acylphosphatase family.

It catalyses the reaction an acyl phosphate + H2O = a carboxylate + phosphate + H(+). This chain is Acylphosphatase (acyP), found in Coxiella burnetii (strain RSA 493 / Nine Mile phase I).